The following is a 241-amino-acid chain: Uridylate kinase (241 aa).

12–15 (KISG) lines the ATP pocket. The tract at residues 20-25 (GDKGNG) is involved in allosteric activation by GTP. Position 54 (G54) interacts with UMP. Positions 55 and 59 each coordinate ATP. UMP contacts are provided by residues D74 and 135-142 (TGNPYFST). Residues N163, Y169, and D172 each coordinate ATP.

Belongs to the UMP kinase family. Homohexamer.

Its subcellular location is the cytoplasm. The enzyme catalyses UMP + ATP = UDP + ADP. Its pathway is pyrimidine metabolism; CTP biosynthesis via de novo pathway; UDP from UMP (UMPK route): step 1/1. Allosterically activated by GTP. Inhibited by UTP. In terms of biological role, catalyzes the reversible phosphorylation of UMP to UDP. This chain is Uridylate kinase, found in Lactobacillus acidophilus (strain ATCC 700396 / NCK56 / N2 / NCFM).